Consider the following 636-residue polypeptide: Translation factor GUF1 homolog, chloroplastic (636 aa).

A tr-type G domain is found at 31-212 (NLARNFSIIA…AIVTKIPPPQ (182 aa)). Residues 40 to 47 (AHIDHGKS), 105 to 109 (DTPGH), and 159 to 162 (NKID) contribute to the GTP site.

The protein belongs to the TRAFAC class translation factor GTPase superfamily. Classic translation factor GTPase family. LepA subfamily.

The protein localises to the plastid. It localises to the chloroplast. It catalyses the reaction GTP + H2O = GDP + phosphate + H(+). Its function is as follows. Promotes chloroplast protein synthesis. May act as a fidelity factor of the translation reaction, by catalyzing a one-codon backward translocation of tRNAs on improperly translocated ribosomes. The chain is Translation factor GUF1 homolog, chloroplastic from Oryza sativa subsp. indica (Rice).